The primary structure comprises 96 residues: U-stichotoxin-Hau2b (96 aa).

A signal peptide spans 1–18; sequence MKPIFIVALLFSTCLVNA. Propeptides lie at residues 19–29 and 30–33; these read KPSIDDAEMKR and EPKP. Cystine bridges form between cysteine 40–cysteine 51 and cysteine 43–cysteine 58. Propeptides lie at residues 62-64 and 65-68; these read RKR and EPKP. Cystine bridges form between cysteine 75/cysteine 86 and cysteine 78/cysteine 93.

Belongs to the sea anemone BBH family.

It localises to the secreted. The protein resides in the nematocyst. Neurotoxin that paralyzes freshwater crabs at high concentration. In Heteractis aurora (Banded sea anemone), this protein is U-stichotoxin-Hau2b.